We begin with the raw amino-acid sequence, 374 residues long: Type IV secretion system protein PtlG homolog (374 aa).

A helical transmembrane segment spans residues Trp38 to Trp56. The segment at His86–Pro117 is disordered. A compositionally biased stretch (pro residues) spans Pro92–Pro117.

This sequence belongs to the TrbI/VirB10 family.

Its subcellular location is the cell membrane. This Bordetella bronchiseptica (strain ATCC BAA-588 / NCTC 13252 / RB50) (Alcaligenes bronchisepticus) protein is Type IV secretion system protein PtlG homolog (ptlG).